A 313-amino-acid chain; its full sequence is MEIILANPRGFCAGVDRAIEIVDRAIEVFGAPIYVRHEVVHNRYVVDGLRERGAVFVEELSEVPENSTVIFSAHGVSKQIQEEARERGLQVFDATCPLVTKVHIEVHQHASEGREIVFIGHAGHPEVEGTMGQYDNPAGGIYLVESPEDVEMLQVKNPDNLAYVTQTTLSIDDTGAVVEALKMRFPKILGPRKDDICYATQNRQDAVKKLAAQCDTILVVGSPNSSNSNRLREIADKLGRKAFLIDNAAQLTRDMVAGAQRIGVTAGASAPEILVQQVIAQLKEWGGRTATETQGIEEKVVFSLPKELRRLNA.

[4Fe-4S] cluster is bound at residue cysteine 12. Histidine 41 and histidine 74 together coordinate (2E)-4-hydroxy-3-methylbut-2-enyl diphosphate. Residues histidine 41 and histidine 74 each contribute to the dimethylallyl diphosphate site. Histidine 41 and histidine 74 together coordinate isopentenyl diphosphate. Cysteine 96 is a [4Fe-4S] cluster binding site. Histidine 124 lines the (2E)-4-hydroxy-3-methylbut-2-enyl diphosphate pocket. Histidine 124 is a binding site for dimethylallyl diphosphate. Histidine 124 lines the isopentenyl diphosphate pocket. Catalysis depends on glutamate 126, which acts as the Proton donor. Threonine 167 provides a ligand contact to (2E)-4-hydroxy-3-methylbut-2-enyl diphosphate. Cysteine 197 is a binding site for [4Fe-4S] cluster. (2E)-4-hydroxy-3-methylbut-2-enyl diphosphate contacts are provided by serine 225, serine 226, asparagine 227, and serine 269. Dimethylallyl diphosphate is bound by residues serine 225, serine 226, asparagine 227, and serine 269. Isopentenyl diphosphate-binding residues include serine 225, serine 226, asparagine 227, and serine 269.

The protein belongs to the IspH family. [4Fe-4S] cluster serves as cofactor.

The catalysed reaction is isopentenyl diphosphate + 2 oxidized [2Fe-2S]-[ferredoxin] + H2O = (2E)-4-hydroxy-3-methylbut-2-enyl diphosphate + 2 reduced [2Fe-2S]-[ferredoxin] + 2 H(+). The enzyme catalyses dimethylallyl diphosphate + 2 oxidized [2Fe-2S]-[ferredoxin] + H2O = (2E)-4-hydroxy-3-methylbut-2-enyl diphosphate + 2 reduced [2Fe-2S]-[ferredoxin] + 2 H(+). Its pathway is isoprenoid biosynthesis; dimethylallyl diphosphate biosynthesis; dimethylallyl diphosphate from (2E)-4-hydroxy-3-methylbutenyl diphosphate: step 1/1. It participates in isoprenoid biosynthesis; isopentenyl diphosphate biosynthesis via DXP pathway; isopentenyl diphosphate from 1-deoxy-D-xylulose 5-phosphate: step 6/6. Functionally, catalyzes the conversion of 1-hydroxy-2-methyl-2-(E)-butenyl 4-diphosphate (HMBPP) into a mixture of isopentenyl diphosphate (IPP) and dimethylallyl diphosphate (DMAPP). Acts in the terminal step of the DOXP/MEP pathway for isoprenoid precursor biosynthesis. This chain is 4-hydroxy-3-methylbut-2-enyl diphosphate reductase, found in Methylococcus capsulatus (strain ATCC 33009 / NCIMB 11132 / Bath).